The primary structure comprises 563 residues: MDYKSKVAELIKKHVELEIEAIEKLIEIPPKPEMGDYAFPCFQLSKVMRKAPNMIAEELKNSMSTDGFERIENLGPYVNFFVDKGVFAENTIKKALEDGENYGASNIGEGKTVCVEYSSPNIAKPFHVGHLFTTAIGNSLYKMFKKEGYNTVGLNHLGDWGTQFGKLISAYDRWVDEEALEKAPIDELLRIYVKFHEEAEKDPSLEDEARANFKALETGDEKATALWTRFRDLSLKEFERVYNILGVKFDSLAGEAFYNDKMDVVVNELKEKGLLVESNGAQVVMLEEYNMPPCIVLKGDGASIYATRDLAAAMYRKKTYDFHKCVYVVGTPQALHFKQVFKVLELAGHEWAKDCVHVGFGLVKFADRKLSTRNGSIVLLDDLLREAVEKTMEVINEKNPELENKEEVAKKIGVGAVIFTYLKNSREKDIVFDWKEILSFDGETGPYVQYSYARGNSILNRGKECTGTVDYSKLSSKEEFELVKSIANFNSVITLALDKLEPSILTRYVIEVAKGFNKFYNAHSVLNLEDEDLKATRLNLVKASLQVIKNGLELLGIDVVEKM.

The 'HIGH' region signature appears at 120–130 (PNIAKPFHVGH).

It belongs to the class-I aminoacyl-tRNA synthetase family. As to quaternary structure, monomer.

The protein resides in the cytoplasm. The enzyme catalyses tRNA(Arg) + L-arginine + ATP = L-arginyl-tRNA(Arg) + AMP + diphosphate. The polypeptide is Arginine--tRNA ligase (Clostridium beijerinckii (strain ATCC 51743 / NCIMB 8052) (Clostridium acetobutylicum)).